The following is a 222-amino-acid chain: Putative N-acetylmannosamine-6-phosphate 2-epimerase (222 aa).

It belongs to the NanE family.

It carries out the reaction an N-acyl-D-glucosamine 6-phosphate = an N-acyl-D-mannosamine 6-phosphate. The protein operates within amino-sugar metabolism; N-acetylneuraminate degradation; D-fructose 6-phosphate from N-acetylneuraminate: step 3/5. In terms of biological role, converts N-acetylmannosamine-6-phosphate (ManNAc-6-P) to N-acetylglucosamine-6-phosphate (GlcNAc-6-P). The chain is Putative N-acetylmannosamine-6-phosphate 2-epimerase from Staphylococcus aureus (strain USA300).